A 464-amino-acid chain; its full sequence is Myrosinase 1 (464 aa).

Residue Gln19 participates in substrate binding. Residues His39 and Asp52 each contribute to the Zn(2+) site. Residues His122 and Asn166 each coordinate substrate. Glu167 acts as the Nucleophile in catalysis. Glu374 (proton donor) is an active-site residue. N-linked (GlcNAc...) asparagine glycosylation occurs at Asn397.

Homodimer. In terms of tissue distribution, expressed in the skeletal muscle tissues surrounding the head, abdomen and thorax. Not expressed in flight muscles (at protein level).

The catalysed reaction is a thioglucoside + H2O = a sugar + a thiol.. In terms of biological role, hydrolyzes glucosinolates to a labile aglycone. This rapidly undergoes spontaneous rearrangement, eliminating sulfur to yield a number of toxic metabolites. Thereby developing a chemical defense system that exploits and mimics the host plant. This chain is Myrosinase 1, found in Brevicoryne brassicae (Mealy cabbage aphid).